The chain runs to 489 residues: Cytochrome P450-DIT2 (489 aa).

Cysteine 435 is a heme binding site.

The protein belongs to the cytochrome P450 family. It depends on heme as a cofactor.

Functionally, involved in spore wall maturation. Thought to catalyze the oxidation of tyrosine residues in the formation of LL-dityrosine a precursor of the spore wall. The protein is Cytochrome P450-DIT2 (DIT2) of Saccharomyces cerevisiae (strain ATCC 204508 / S288c) (Baker's yeast).